The chain runs to 317 residues: Pantothenate kinase (317 aa).

95-102 (GSVAVGKS) contributes to the ATP binding site.

The protein belongs to the prokaryotic pantothenate kinase family.

It is found in the cytoplasm. The catalysed reaction is (R)-pantothenate + ATP = (R)-4'-phosphopantothenate + ADP + H(+). It functions in the pathway cofactor biosynthesis; coenzyme A biosynthesis; CoA from (R)-pantothenate: step 1/5. The chain is Pantothenate kinase from Rhodopseudomonas palustris (strain BisB18).